We begin with the raw amino-acid sequence, 300 residues long: GTPase Era (300 aa).

The region spanning 4–172 is the Era-type G domain; that stretch reads KSGFVALAGK…LEKIKEELPE (169 aa). The tract at residues 12–19 is G1; sequence GKPNVGKS. GTP is bound at residue 12–19; the sequence is GKPNVGKS. The interval 38–42 is G2; sequence QTTRN. The segment at 59-62 is G3; that stretch reads DTPG. GTP is bound by residues 59-63 and 121-124; these read DTPGI and NKID. The interval 121–124 is G4; that stretch reads NKID. Positions 151–153 are G5; it reads ISA. In terms of domain architecture, KH type-2 spans 195–280; sequence IREKIFHLTR…YLDLNVKVKE (86 aa).

Belongs to the TRAFAC class TrmE-Era-EngA-EngB-Septin-like GTPase superfamily. Era GTPase family. Monomer.

The protein resides in the cytoplasm. It localises to the cell inner membrane. Functionally, an essential GTPase that binds both GDP and GTP, with rapid nucleotide exchange. Plays a role in 16S rRNA processing and 30S ribosomal subunit biogenesis and possibly also in cell cycle regulation and energy metabolism. This chain is GTPase Era, found in Thermotoga maritima (strain ATCC 43589 / DSM 3109 / JCM 10099 / NBRC 100826 / MSB8).